We begin with the raw amino-acid sequence, 141 residues long: Acetyltransferase YE1169 (141 aa).

One can recognise an N-acetyltransferase domain in the interval 1–141 (MEIRVFQQSD…GKRLIVDQEY (141 aa)).

It belongs to the acetyltransferase family. YpeA subfamily.

This chain is Acetyltransferase YE1169, found in Yersinia enterocolitica serotype O:8 / biotype 1B (strain NCTC 13174 / 8081).